The primary structure comprises 147 residues: Small ribosomal subunit protein uS12 (147 aa).

This sequence belongs to the universal ribosomal protein uS12 family. In terms of assembly, part of the 30S ribosomal subunit.

Functionally, with S4 and S5 plays an important role in translational accuracy. Located at the interface of the 30S and 50S subunits. This chain is Small ribosomal subunit protein uS12, found in Staphylothermus marinus (strain ATCC 43588 / DSM 3639 / JCM 9404 / F1).